Reading from the N-terminus, the 448-residue chain is Phosphoglucosamine mutase (448 aa).

Ser-100 serves as the catalytic Phosphoserine intermediate. Ser-100, Asp-240, Asp-242, and Asp-244 together coordinate Mg(2+). Ser-100 carries the post-translational modification Phosphoserine.

It belongs to the phosphohexose mutase family. It depends on Mg(2+) as a cofactor. Post-translationally, activated by phosphorylation.

It catalyses the reaction alpha-D-glucosamine 1-phosphate = D-glucosamine 6-phosphate. In terms of biological role, catalyzes the conversion of glucosamine-6-phosphate to glucosamine-1-phosphate. This Clostridium acetobutylicum (strain ATCC 824 / DSM 792 / JCM 1419 / IAM 19013 / LMG 5710 / NBRC 13948 / NRRL B-527 / VKM B-1787 / 2291 / W) protein is Phosphoglucosamine mutase.